A 707-amino-acid polypeptide reads, in one-letter code: ATP-dependent zinc metalloprotease FtsH (707 aa).

The Cytoplasmic segment spans residues 1–25 (MSELDNKKDKSKDSNKKPKKPGAFS). Residues 26–46 (IGNIIIFVIVALLLIWVVFAF) form a helical membrane-spanning segment. The Extracellular portion of the chain corresponds to 47–128 (LPNNPGTNKS…GTTFTGLELA (82 aa)). The chain crosses the membrane as a helical span at residues 129–149 (TLAIANTSASGIGTLNFSGLV). At 150-707 (TPTNQALAIL…IKTDESLDIK (558 aa)) the chain is on the cytoplasmic side. 246–253 (GPPGTGKT) contacts ATP. Residue His468 participates in Zn(2+) binding. Residue Glu469 is part of the active site. His472 and Asp546 together coordinate Zn(2+).

This sequence in the central section; belongs to the AAA ATPase family. It in the C-terminal section; belongs to the peptidase M41 family. As to quaternary structure, homohexamer. The cofactor is Zn(2+).

The protein localises to the cell membrane. Acts as a processive, ATP-dependent zinc metallopeptidase for both cytoplasmic and membrane proteins. Plays a role in the quality control of integral membrane proteins. This Mycoplasma mobile (strain ATCC 43663 / 163K / NCTC 11711) (Mesomycoplasma mobile) protein is ATP-dependent zinc metalloprotease FtsH.